A 142-amino-acid chain; its full sequence is MSSLSSSSSNVRMDRRFDWVGPPDSVSKIRKIMLRRVDNESELERQYRAAREELNQWNSDFWAEHNQLFDRQKSEFVEKKQKELGRLEHVSANELSEFYRDFLNDRHVAMMVYNKEWYRRNLQLIWPALKVNVVRFFRMARR.

The protein belongs to the COA8 family.

It is found in the mitochondrion inner membrane. In terms of biological role, may be required for cytochrome c complex (COX) assembly and function, COX being the terminal component of the mitochondrial respiratory chain. This chain is COA8 family protein CBG23705, mitochondrial, found in Caenorhabditis briggsae.